The sequence spans 134 residues: MTISLGFVVAEFNRDLTYQMELLGREHAEFLGATVKETILVPGVFDMPLAIKKLCQREDIDAVVTIGSVIEGETDHDQVVMQHAARKIMDLSLEFNKPVTLGIPGPGMTRMAAHERVDYAKRAVEAAVKLVRRL.

Residues F12, 44-46, and 68-70 contribute to the 5-amino-6-(D-ribitylamino)uracil site; these read VFD and SVI. 73–74 serves as a coordination point for (2S)-2-hydroxy-3-oxobutyl phosphate; that stretch reads ET. H76 (proton donor) is an active-site residue. Residue L101 participates in 5-amino-6-(D-ribitylamino)uracil binding. A (2S)-2-hydroxy-3-oxobutyl phosphate-binding site is contributed by R116.

Belongs to the DMRL synthase family.

It carries out the reaction (2S)-2-hydroxy-3-oxobutyl phosphate + 5-amino-6-(D-ribitylamino)uracil = 6,7-dimethyl-8-(1-D-ribityl)lumazine + phosphate + 2 H2O + H(+). The protein operates within cofactor biosynthesis; riboflavin biosynthesis; riboflavin from 2-hydroxy-3-oxobutyl phosphate and 5-amino-6-(D-ribitylamino)uracil: step 1/2. Catalyzes the formation of 6,7-dimethyl-8-ribityllumazine by condensation of 5-amino-6-(D-ribitylamino)uracil with 3,4-dihydroxy-2-butanone 4-phosphate. This is the penultimate step in the biosynthesis of riboflavin. This is 6,7-dimethyl-8-ribityllumazine synthase from Methanosarcina mazei (strain ATCC BAA-159 / DSM 3647 / Goe1 / Go1 / JCM 11833 / OCM 88) (Methanosarcina frisia).